A 242-amino-acid chain; its full sequence is uncharacterized protein (242 aa).

The region spanning 3–116 (TALVIDDEPF…RLRKTVKRLS (114 aa)) is the Response regulatory domain. Asp54 is subject to 4-aspartylphosphate. The HTH LytTR-type domain maps to 139–240 (IPCIGHNRIV…LKLLKEMLGL (102 aa)).

This is an uncharacterized protein from Vibrio vulnificus (strain CMCP6).